Reading from the N-terminus, the 314-residue chain is DNA-directed RNA polymerase subunit alpha (314 aa).

Residues 1–228 are alpha N-terminal domain (alpha-NTD); that stretch reads MIEIEKPKIE…EHLNIFVGLT (228 aa). An alpha C-terminal domain (alpha-CTD) region spans residues 245–314; the sequence is KEKVLEMTIE…ELGLGLRKDD (70 aa).

Belongs to the RNA polymerase alpha chain family. In terms of assembly, homodimer. The RNAP catalytic core consists of 2 alpha, 1 beta, 1 beta' and 1 omega subunit. When a sigma factor is associated with the core the holoenzyme is formed, which can initiate transcription.

It carries out the reaction RNA(n) + a ribonucleoside 5'-triphosphate = RNA(n+1) + diphosphate. DNA-dependent RNA polymerase catalyzes the transcription of DNA into RNA using the four ribonucleoside triphosphates as substrates. The polypeptide is DNA-directed RNA polymerase subunit alpha (Bacillus licheniformis (strain ATCC 14580 / DSM 13 / JCM 2505 / CCUG 7422 / NBRC 12200 / NCIMB 9375 / NCTC 10341 / NRRL NRS-1264 / Gibson 46)).